We begin with the raw amino-acid sequence, 439 residues long: MTFDDLTEGQKNAFNIVMKAIKEKKHHVTINGPAGTGKTTLTKFIIEALISTGGTGIILAAPTHAAKKILSKLSGKEASTIHSILKINPVTYEENVLFEQKEVPDLAKCRVLICDEVSMYDRKLFKILLSTIPPWCTIIGIGDNKQIRPVEPGENTAYISPFFTHKDFYQCELTEVKRSNAPIIDVATDVRNGKWNYDKVVDGHGVRGFTGDTALRDFMVNYFSIVKSLDDLFENRVMAFTNKSVDKLNSIIRKKIFETDKDFIVGEIIVMQEPLFKTYKIDGKPVSEIIFNNGQLVRIIEAEYTSTFVKARGVPGEYLIRHWDLTVETYGDDEYYREKIKIISSDEELYKFNLFLAKTAETYKNWNKGGKAPWSDFWDAKSQFSKVKALPASTFHKAQGMSVDRAFIYTPCIHYADVELAQQLLYVGVTRGRYDVFYV.

32–39 (GPAGTGKT) lines the ATP pocket.

Monomer. Interacts with UvsX and gene 32 protein.

It catalyses the reaction Couples ATP hydrolysis with the unwinding of duplex DNA at the replication fork by translocating in the 5'-3' direction. This creates two antiparallel DNA single strands (ssDNA). The leading ssDNA polymer is the template for DNA polymerase III holoenzyme which synthesizes a continuous strand.. The enzyme catalyses ATP + H2O = ADP + phosphate + H(+). DNA helicase that stimulates viral DNA replication and recombination. Plays a role in T4 DNA replication initiation by selecting and activating DNA origins. Acts by dissociating and reassociating with the DNA molecule being unwound. Unwinds DNA as a monomer in a 5'-3' direction at a rate of 250 bp/s and can efficiently displace proteins from the DNA. The chain is ATP-dependent DNA helicase dda (dda) from Enterobacteria phage T4 (Bacteriophage T4).